The primary structure comprises 292 residues: ATP phosphoribosyltransferase (292 aa).

It belongs to the ATP phosphoribosyltransferase family. Long subfamily. The cofactor is Mg(2+).

It is found in the cytoplasm. It carries out the reaction 1-(5-phospho-beta-D-ribosyl)-ATP + diphosphate = 5-phospho-alpha-D-ribose 1-diphosphate + ATP. It participates in amino-acid biosynthesis; L-histidine biosynthesis; L-histidine from 5-phospho-alpha-D-ribose 1-diphosphate: step 1/9. With respect to regulation, feedback inhibited by histidine. Functionally, catalyzes the condensation of ATP and 5-phosphoribose 1-diphosphate to form N'-(5'-phosphoribosyl)-ATP (PR-ATP). Has a crucial role in the pathway because the rate of histidine biosynthesis seems to be controlled primarily by regulation of HisG enzymatic activity. The chain is ATP phosphoribosyltransferase from Thermodesulfovibrio yellowstonii (strain ATCC 51303 / DSM 11347 / YP87).